The sequence spans 419 residues: Hyaluronidase-3 (419 aa).

The first 16 residues, 1 to 16 (MTMQLGLALVLGVAMC), serve as a signal peptide directing secretion. Intrachain disulfides connect Cys-42-Cys-331, Cys-205-Cys-220, Cys-356-Cys-367, Cys-361-Cys-395, and Cys-397-Cys-406. A glycan (N-linked (GlcNAc...) asparagine) is linked at Asn-69. Glu-129 serves as the catalytic Proton donor. Asn-215 is a glycosylation site (N-linked (GlcNAc...) asparagine). In terms of domain architecture, EGF-like spans 352–407 (AAMACSHQRCHGHGRCAWQDPGQLKVFLHLHPGGSPGAWESFSCRCYWGWAGPTCQ).

Belongs to the glycosyl hydrolase 56 family. Post-translationally, N-glycosylated. As to expression, highly expressed in bladder, spleen and liver. Expressed at low levels in the kidney.

It localises to the secreted. It is found in the cell membrane. Its subcellular location is the cytoplasmic vesicle. The protein resides in the secretory vesicle. The protein localises to the acrosome. It localises to the endoplasmic reticulum. It is found in the early endosome. The enzyme catalyses Random hydrolysis of (1-&gt;4)-linkages between N-acetyl-beta-D-glucosamine and D-glucuronate residues in hyaluronate.. Facilitates sperm penetration into the layer of cumulus cells surrounding the egg by digesting hyaluronic acid. Involved in induction of the acrosome reaction in the sperm. Involved in follicular atresia, the breakdown of immature ovarian follicles that are not selected to ovulate. Induces ovarian granulosa cell apoptosis, possibly via apoptotic signaling pathway involving CASP8 and CASP3 activation, and poly(ADP-ribose) polymerase (PARP) cleavage. Has no hyaluronidase activity in embryonic fibroblasts in vitro. Has no hyaluronidase activity in granulosa cells in vitro. The chain is Hyaluronidase-3 (HYAL3) from Sus scrofa (Pig).